We begin with the raw amino-acid sequence, 132 residues long: Small ribosomal subunit protein bS6 (132 aa).

The segment at 96 to 132 (HAEGPSIQMQKRDERERGDRGDRSDRGDRGDRGGFRR) is disordered. Over residues 105 to 132 (QKRDERERGDRGDRSDRGDRGDRGGFRR) the composition is skewed to basic and acidic residues.

This sequence belongs to the bacterial ribosomal protein bS6 family.

In terms of biological role, binds together with bS18 to 16S ribosomal RNA. In Cereibacter sphaeroides (strain ATCC 17023 / DSM 158 / JCM 6121 / CCUG 31486 / LMG 2827 / NBRC 12203 / NCIMB 8253 / ATH 2.4.1.) (Rhodobacter sphaeroides), this protein is Small ribosomal subunit protein bS6.